A 327-amino-acid chain; its full sequence is Microtubule-associated protein RP/EB family member 2 (327 aa).

Positions 1-21 (MPGPTQTLSPNGENNNDIIQD) are disordered. Ser9 is subject to Phosphoserine. One can recognise a Calponin-homology (CH) domain in the interval 57–159 (TMSRHDIIAW…FIQWFKKFYD (103 aa)). Tyr167 bears the Phosphotyrosine mark. Disordered stretches follow at residues 171 to 240 (EARQ…DKDL) and 299 to 327 (ASEE…QEEY). A DCTN1-binding region spans residues 187 to 327 (QIFNLPKKSH…EQQPPQQEEY (141 aa)). Residues 200–234 (SPTAGAAKSSPAAKPGSTPSRPSSAKRASSSGSAS) are compositionally biased toward low complexity. Residue Ser219 is modified to Phosphoserine. Positions 236–306 (SDKDLETQVI…LYASEEHEGH (71 aa)) constitute an EB1 C-terminal domain. The segment at 259–302 (EGVEKERDFYFGKLREIELLCQEHGQENDDLVQRLMDVLYASEE) is APC-binding. Positions 300-317 (SEEHEGHTEEPEAEEQAH) are enriched in basic and acidic residues. The segment covering 318–327 (EQQPPQQEEY) has biased composition (low complexity).

The protein belongs to the MAPRE family. As to quaternary structure, interacts with DCTN1. Interacts with APC (via C-terminal). Interacts with monomeric and polymerized tubulin. Interacts with SLAIN1. Interacts (via the N-terminal region) with BAG1.

It localises to the cytoplasm. The protein resides in the cytoskeleton. May be involved in microtubule polymerization, and spindle function by stabilizing microtubules and anchoring them at centrosomes. May play a role in cell migration. This Pongo abelii (Sumatran orangutan) protein is Microtubule-associated protein RP/EB family member 2 (MAPRE2).